A 383-amino-acid chain; its full sequence is Fructose-1,6-bisphosphate aldolase/phosphatase (383 aa).

D11 acts as the Proton acceptor; for FBP phosphatase activity in catalysis. Mg(2+) is bound by residues D11, H18, D52, and D53. H18 contributes to the beta-D-fructose 1,6-bisphosphate binding site. Residue H18 coordinates dihydroxyacetone phosphate. Residue Y90 participates in beta-D-fructose 1,6-bisphosphate binding. A Mg(2+)-binding site is contributed by Q94. 103–104 (GN) lines the beta-D-fructose 1,6-bisphosphate pocket. D131 provides a ligand contact to Mg(2+). Residue K132 participates in beta-D-fructose 1,6-bisphosphate binding. K132 lines the dihydroxyacetone phosphate pocket. Y228 serves as the catalytic Proton donor/acceptor; for FBP aldolase activity. Mg(2+) is bound by residues K231, D232, and D233. Residue K231 is the Schiff-base intermediate with DHAP; for FBP aldolase activity of the active site. Beta-D-fructose 1,6-bisphosphate contacts are provided by residues 241–242 (QH), R265, D286, and Y347. Dihydroxyacetone phosphate contacts are provided by R265 and D286. The interval 361 to 383 (FKKEEDVKKAKPSVYTSKDQGMD) is disordered. Positions 374–383 (VYTSKDQGMD) are enriched in polar residues.

Belongs to the FBP aldolase/phosphatase family. As to quaternary structure, homooctamer; dimer of tetramers. It depends on Mg(2+) as a cofactor.

It catalyses the reaction beta-D-fructose 1,6-bisphosphate + H2O = beta-D-fructose 6-phosphate + phosphate. The enzyme catalyses beta-D-fructose 1,6-bisphosphate = D-glyceraldehyde 3-phosphate + dihydroxyacetone phosphate. It functions in the pathway carbohydrate biosynthesis; gluconeogenesis. Its function is as follows. Catalyzes two subsequent steps in gluconeogenesis: the aldol condensation of dihydroxyacetone phosphate (DHAP) and glyceraldehyde-3-phosphate (GA3P) to fructose-1,6-bisphosphate (FBP), and the dephosphorylation of FBP to fructose-6-phosphate (F6P). This Metallosphaera sedula (strain ATCC 51363 / DSM 5348 / JCM 9185 / NBRC 15509 / TH2) protein is Fructose-1,6-bisphosphate aldolase/phosphatase.